Here is a 105-residue protein sequence, read N- to C-terminus: Large ribosomal subunit protein P2 (105 aa).

The disordered stretch occupies residues 84-105 (AEAKKEEPEEEADDDMGFGLFD).

It belongs to the eukaryotic ribosomal protein P1/P2 family. P1 and P2 exist as dimers at the large ribosomal subunit. In terms of processing, phosphorylated.

Functionally, plays an important role in the elongation step of protein synthesis. This Leishmania donovani protein is Large ribosomal subunit protein P2 (ARP-1).